The sequence spans 545 residues: ATP synthase subunit alpha (545 aa).

G173 to T180 is an ATP binding site.

This sequence belongs to the ATPase alpha/beta chains family. As to quaternary structure, F-type ATPases have 2 components, CF(1) - the catalytic core - and CF(0) - the membrane proton channel. CF(1) has five subunits: alpha(3), beta(3), gamma(1), delta(1), epsilon(1). CF(0) has three main subunits: a(1), b(2) and c(9-12). The alpha and beta chains form an alternating ring which encloses part of the gamma chain. CF(1) is attached to CF(0) by a central stalk formed by the gamma and epsilon chains, while a peripheral stalk is formed by the delta and b chains.

The protein resides in the cell membrane. The enzyme catalyses ATP + H2O + 4 H(+)(in) = ADP + phosphate + 5 H(+)(out). Functionally, produces ATP from ADP in the presence of a proton gradient across the membrane. The alpha chain is a regulatory subunit. This is ATP synthase subunit alpha from Clavibacter michiganensis subsp. michiganensis (strain NCPPB 382).